A 196-amino-acid chain; its full sequence is GTP cyclohydrolase 1 (196 aa).

Residues C86, H89, and C158 each contribute to the Zn(2+) site.

This sequence belongs to the GTP cyclohydrolase I family. In terms of assembly, toroid-shaped homodecamer, composed of two pentamers of five dimers.

It carries out the reaction GTP + H2O = 7,8-dihydroneopterin 3'-triphosphate + formate + H(+). It participates in cofactor biosynthesis; 7,8-dihydroneopterin triphosphate biosynthesis; 7,8-dihydroneopterin triphosphate from GTP: step 1/1. The protein is GTP cyclohydrolase 1 of Clostridium botulinum (strain Langeland / NCTC 10281 / Type F).